The sequence spans 273 residues: MLKQAVEHRGGFSFENCQRNASLEHVLPGLRVPLARKTGTTIAGLVFRDGVILGADTRATNDSVVADKSCEKIHFIAPKIYCCGAGVAADTEMTTRMAASKMELHALSTGREPRVATVTRILRQTLFRYQGHVGASLIVGGVDLNGPQLYSVHPHGSYSRLPFTALGSGQDAAVALLEDRFQPNMTLEAAQELLVEAITAGILGDLGSGGSVDACVITAGGAKLQRALSSPIEPVQRAGQYRFAPGTTPVQTQEVRALTLELLEETVQAMEVE.

Position 1 is an N-acetylmethionine (methionine 1). Residues 1–39 constitute a propeptide, removed in mature form; sequence MLKQAVEHRGGFSFENCQRNASLEHVLPGLRVPLARKTG. Threonine 40 acts as the Nucleophile in catalysis. Serine 230 is modified (phosphoserine).

It belongs to the peptidase T1B family. As to quaternary structure, the 26S proteasome consists of a 20S proteasome core and two 19S regulatory subunits. The 20S proteasome core is composed of 28 subunits that are arranged in four stacked rings, resulting in a barrel-shaped structure. The two end rings are each formed by seven alpha subunits, and the two central rings are each formed by seven beta subunits. The catalytic chamber with the active sites is on the inside of the barrel. Component of the immunoproteasome, where it displaces the equivalent housekeeping subunit PSMB7. Component of the spermatoproteasome, a form of the proteasome specifically found in testis. Autocleaved. The resulting N-terminal Thr residue of the mature subunit is responsible for the nucleophile proteolytic activity.

Its subcellular location is the cytoplasm. The protein localises to the nucleus. The enzyme catalyses Cleavage of peptide bonds with very broad specificity.. Functionally, the proteasome is a multicatalytic proteinase complex which is characterized by its ability to cleave peptides with Arg, Phe, Tyr, Leu, and Glu adjacent to the leaving group at neutral or slightly basic pH. The proteasome has an ATP-dependent proteolytic activity. This subunit is involved in antigen processing to generate class I binding peptides. The sequence is that of Proteasome subunit beta type-10 (Psmb10) from Rattus norvegicus (Rat).